Consider the following 87-residue polypeptide: Large ribosomal subunit protein bL27 (87 aa).

The protein belongs to the bacterial ribosomal protein bL27 family.

This chain is Large ribosomal subunit protein bL27, found in Renibacterium salmoninarum (strain ATCC 33209 / DSM 20767 / JCM 11484 / NBRC 15589 / NCIMB 2235).